The following is a 196-amino-acid chain: Holliday junction branch migration complex subunit RuvA (196 aa).

Residues 1-61 (MYEYFEGIVT…DTGITLYGFQ (61 aa)) are domain I. The segment at 62 to 140 (SEDDKGLFLK…DYVARLDRQD (79 aa)) is domain II. The segment at 141-149 (EEQGNISPA) is flexible linker. Positions 149-196 (ALNDALLALIALGYTQKEVDRITTKLEEVNADTADQYIKKGLALLLKK) are domain III.

Belongs to the RuvA family. In terms of assembly, homotetramer. Forms an RuvA(8)-RuvB(12)-Holliday junction (HJ) complex. HJ DNA is sandwiched between 2 RuvA tetramers; dsDNA enters through RuvA and exits via RuvB. An RuvB hexamer assembles on each DNA strand where it exits the tetramer. Each RuvB hexamer is contacted by two RuvA subunits (via domain III) on 2 adjacent RuvB subunits; this complex drives branch migration. In the full resolvosome a probable DNA-RuvA(4)-RuvB(12)-RuvC(2) complex forms which resolves the HJ.

The protein resides in the cytoplasm. Functionally, the RuvA-RuvB-RuvC complex processes Holliday junction (HJ) DNA during genetic recombination and DNA repair, while the RuvA-RuvB complex plays an important role in the rescue of blocked DNA replication forks via replication fork reversal (RFR). RuvA specifically binds to HJ cruciform DNA, conferring on it an open structure. The RuvB hexamer acts as an ATP-dependent pump, pulling dsDNA into and through the RuvAB complex. HJ branch migration allows RuvC to scan DNA until it finds its consensus sequence, where it cleaves and resolves the cruciform DNA. In Lactobacillus helveticus (strain DPC 4571), this protein is Holliday junction branch migration complex subunit RuvA.